A 178-amino-acid chain; its full sequence is Orotate phosphoribosyltransferase (178 aa).

Residues R92, K93, K96, and E118 to S126 contribute to the 5-phospho-alpha-D-ribose 1-diphosphate site. The orotate site is built by T122 and R150.

This sequence belongs to the purine/pyrimidine phosphoribosyltransferase family. PyrE subfamily. As to quaternary structure, homodimer. The cofactor is Mg(2+).

It carries out the reaction orotidine 5'-phosphate + diphosphate = orotate + 5-phospho-alpha-D-ribose 1-diphosphate. The protein operates within pyrimidine metabolism; UMP biosynthesis via de novo pathway; UMP from orotate: step 1/2. Catalyzes the transfer of a ribosyl phosphate group from 5-phosphoribose 1-diphosphate to orotate, leading to the formation of orotidine monophosphate (OMP). The chain is Orotate phosphoribosyltransferase from Methanosphaera stadtmanae (strain ATCC 43021 / DSM 3091 / JCM 11832 / MCB-3).